Here is a 338-residue protein sequence, read N- to C-terminus: RNA 3'-terminal phosphate cyclase (338 aa).

ATP-binding positions include Gln-103 and Tyr-283–Gln-287. The active-site Tele-AMP-histidine intermediate is the His-308.

Belongs to the RNA 3'-terminal cyclase family. Type 1 subfamily.

The protein resides in the cytoplasm. It carries out the reaction a 3'-end 3'-phospho-ribonucleotide-RNA + ATP = a 3'-end 2',3'-cyclophospho-ribonucleotide-RNA + AMP + diphosphate. In terms of biological role, catalyzes the conversion of 3'-phosphate to a 2',3'-cyclic phosphodiester at the end of RNA. The mechanism of action of the enzyme occurs in 3 steps: (A) adenylation of the enzyme by ATP; (B) transfer of adenylate to an RNA-N3'P to produce RNA-N3'PP5'A; (C) and attack of the adjacent 2'-hydroxyl on the 3'-phosphorus in the diester linkage to produce the cyclic end product. The biological role of this enzyme is unknown but it is likely to function in some aspects of cellular RNA processing. This is RNA 3'-terminal phosphate cyclase from Escherichia coli O8 (strain IAI1).